A 476-amino-acid chain; its full sequence is Cytochrome P450 monooxygenase ppzE (476 aa).

Cys452 contributes to the heme binding site.

This sequence belongs to the cytochrome P450 family. Heme serves as cofactor.

It functions in the pathway secondary metabolite biosynthesis. Functionally, cytochrome P450 monooxygenase; part of the gene cluster that mediates the biosynthesis of pyrrolopyrazines, secondary metabolites showing insecticidal activity. The role of ppzE within the pathway has still to be determined. The single multifunctional NRPS ppzA is sufficient to produce peramine via condensation of 1-pyrroline-5-carboxylate and arginine, N-methylation of the alpha-amino group of arginine and reduction of the thioester and the cyclization to form an iminium ion resulting in release from the peptide synthetase. Deprotonation of this intermediate and oxidation of the pyrroline ring would give rise to peramine. In Epichloe species that produce only peramine, the peramine synthetase gene is not localized in a gene cluster, in contrast to Metarhizium species that contain additional pyrrolopyrazine biosynthesis genes. The 2-oxoglutarate-Fe(II) type oxidoreductase ppzC hydroxylates peramine to yield the newly identified compound 8-hydroxyperamine whereas ppzD converts L-proline into trans-4-hydroxy-L-proline, a precursor of peramine biosynthesis. The chain is Cytochrome P450 monooxygenase ppzE from Metarhizium majus (strain ARSEF 297).